A 312-amino-acid chain; its full sequence is Ribosomal protein L11 methyltransferase (312 aa).

Positions 162, 183, 205, and 248 each coordinate S-adenosyl-L-methionine.

Belongs to the methyltransferase superfamily. PrmA family.

It is found in the cytoplasm. It catalyses the reaction L-lysyl-[protein] + 3 S-adenosyl-L-methionine = N(6),N(6),N(6)-trimethyl-L-lysyl-[protein] + 3 S-adenosyl-L-homocysteine + 3 H(+). Its function is as follows. Methylates ribosomal protein L11. This chain is Ribosomal protein L11 methyltransferase, found in Geobacillus thermodenitrificans (strain NG80-2).